Reading from the N-terminus, the 251-residue chain is Hydroxyacylglutathione hydrolase (251 aa).

Zn(2+) is bound by residues H53, H55, D57, H58, H110, D127, and H165.

The protein belongs to the metallo-beta-lactamase superfamily. Glyoxalase II family. Monomer. It depends on Zn(2+) as a cofactor.

The enzyme catalyses an S-(2-hydroxyacyl)glutathione + H2O = a 2-hydroxy carboxylate + glutathione + H(+). The protein operates within secondary metabolite metabolism; methylglyoxal degradation; (R)-lactate from methylglyoxal: step 2/2. In terms of biological role, thiolesterase that catalyzes the hydrolysis of S-D-lactoyl-glutathione to form glutathione and D-lactic acid. In Yersinia pseudotuberculosis serotype IB (strain PB1/+), this protein is Hydroxyacylglutathione hydrolase.